Reading from the N-terminus, the 204-residue chain is Large ribosomal subunit protein eL15 (204 aa).

It belongs to the eukaryotic ribosomal protein eL15 family.

The protein is Large ribosomal subunit protein eL15 (RPL15) of Tetrahymena thermophila (strain SB210).